The sequence spans 422 residues: Chorismate synthase (422 aa).

Residues R43 and R49 each coordinate NADP(+). Residues 143 to 145 (RSS), 264 to 265 (QA), G309, 324 to 328 (KPIST), and R350 each bind FMN.

The protein belongs to the chorismate synthase family. Homotetramer. FMNH2 is required as a cofactor.

It catalyses the reaction 5-O-(1-carboxyvinyl)-3-phosphoshikimate = chorismate + phosphate. The protein operates within metabolic intermediate biosynthesis; chorismate biosynthesis; chorismate from D-erythrose 4-phosphate and phosphoenolpyruvate: step 7/7. Its function is as follows. Catalyzes the anti-1,4-elimination of the C-3 phosphate and the C-6 proR hydrogen from 5-enolpyruvylshikimate-3-phosphate (EPSP) to yield chorismate, which is the branch point compound that serves as the starting substrate for the three terminal pathways of aromatic amino acid biosynthesis. This reaction introduces a second double bond into the aromatic ring system. This Corynebacterium jeikeium (strain K411) protein is Chorismate synthase.